The primary structure comprises 916 residues: Protein translocase subunit SecA (916 aa).

Residues Gln86, 104–108 (GEGKT), and Asp494 contribute to the ATP site. The disordered stretch occupies residues 859-916 (LEAPEKPAQLQYTAPSEGGGTQTRVETRSTGRSGNPAKAAEQDAAKDAAKRPAKKKRR). Over residues 880 to 891 (QTRVETRSTGRS) the composition is skewed to polar residues. Residues 898 to 908 (AEQDAAKDAAK) show a composition bias toward basic and acidic residues.

Belongs to the SecA family. In terms of assembly, monomer and homodimer. Part of the essential Sec protein translocation apparatus which comprises SecA, SecYEG and auxiliary proteins SecDF. Other proteins may also be involved.

The protein resides in the cell membrane. The protein localises to the cytoplasm. The enzyme catalyses ATP + H2O + cellular proteinSide 1 = ADP + phosphate + cellular proteinSide 2.. Its function is as follows. Part of the Sec protein translocase complex. Interacts with the SecYEG preprotein conducting channel. Has a central role in coupling the hydrolysis of ATP to the transfer of proteins into and across the cell membrane, serving as an ATP-driven molecular motor driving the stepwise translocation of polypeptide chains across the membrane. This Pseudarthrobacter chlorophenolicus (strain ATCC 700700 / DSM 12829 / CIP 107037 / JCM 12360 / KCTC 9906 / NCIMB 13794 / A6) (Arthrobacter chlorophenolicus) protein is Protein translocase subunit SecA.